A 188-amino-acid chain; its full sequence is Putative manganese efflux pump MntP (188 aa).

Helical transmembrane passes span 3–23 (FYALLLIALGMSMDAFAVALA), 35–55 (IAATALVFGSVEALTPLAGWV), 63–83 (FISEWDHWAAFVLLGGLGLKM), 107–127 (VLTAFGTSIDSMIVGVGLAFM), 131–151 (IAFAAAIIGMATTVMVAVGLA), and 167–187 (AGGLVLIAIGTWTLLSHLGLI).

Belongs to the MntP (TC 9.B.29) family.

The protein localises to the cell inner membrane. Its function is as follows. Probably functions as a manganese efflux pump. The polypeptide is Putative manganese efflux pump MntP (Neisseria meningitidis serogroup A / serotype 4A (strain DSM 15465 / Z2491)).